A 506-amino-acid chain; its full sequence is MKEYKVYLERARSRQQDFLYPLLFREYIYGLAYSHNLNRSIFLENVGYDNKYSLLIVKRLITRMYQQNHLIISANDSNKNRFWGYNKNLDSQIISEGFAIVVEIPFLRQLSSSLEEAEILQSYKNLRSIHSIFPFLEDKFTYLNYVSDIRIPYPIHLEILVQILRYWVKDAPFFHLLRLFLYNFCNWNSFITTRKWISTFSKSNPRLFLFLHNFYVCEYESIFVFLRTKSSHLRFKSFSVFFERIFFYAKREHLEKVFYKDFSYPLTFFKDLNIHYVRYQGKCILASKNAPFWMNKWKHYFIHLWQCFFDVWSQPRMININPLSEHSFQLLGYFLNVRLNRSVVRSQMLQNTFLIEIVIQNLDIIVPIIPLIRSLANAKFCNILGEPISKPVWADSSDFDIIDRFLRICRNLSHYYNGSSKKKSLYRIKYILRLSCIKTLACKHKSTVRAFLKRSGSEELLQEFFTEEEEILSLIFPRDSSTLQRLHRNRIWYLDILFSNDLVHDE.

Belongs to the intron maturase 2 family. MatK subfamily.

Its subcellular location is the plastid. It localises to the chloroplast. In terms of biological role, usually encoded in the trnK tRNA gene intron. Probably assists in splicing its own and other chloroplast group II introns. This chain is Maturase K, found in Lathyrus sativus (White vetchling).